The chain runs to 347 residues: P2Y purinoceptor 12 (347 aa).

Residues 1 to 33 (MDVPGVNTTSANTTFSPGTSTLCVRDYKITQVL) lie on the Extracellular side of the membrane. N-linked (GlcNAc...) asparagine glycosylation is found at asparagine 7 and asparagine 12. 2 disulfide bridges follow: cysteine 23-cysteine 276 and cysteine 103-cysteine 181. A helical membrane pass occupies residues 34-56 (FPLLYTVLFFAGLITNSLAMRIF). Topologically, residues 57–67 (FQIRSKSNFII) are cytoplasmic. Residues serine 61 and serine 63 each carry the phosphoserine modification. A helical transmembrane segment spans residues 68–88 (FLKNTVISDLLMILTFPFKIL). Over 89–103 (SDAKLGAGPLRTLVC) the chain is Extracellular. 3 residues coordinate ADP: arginine 99, cysteine 103, and tyrosine 111. Residues 104–124 (QVTSVTFYFTMYISISFLGLI) traverse the membrane as a helical segment. At 125-148 (TIDRYLKTTRPFKTSSPSNLLGAK) the chain is on the cytoplasmic side. Residues 149–168 (ILSVVIWAFMFLISLPNMIL) form a helical membrane-spanning segment. ADP contacts are provided by residues 162–165 (SLPN), 181–185 (CSFLK), histidine 193, and asparagine 197. The Extracellular portion of the chain corresponds to 169–191 (TNRRPKDKDVTKCSFLKSEFGLV). The helical transmembrane segment at 192–213 (WHEIVNYICQVIFWINFLIVIV) threads the bilayer. Residues 214 to 239 (CYSLITKELYRSYVRTRGSAKVPKKK) lie on the Cytoplasmic side of the membrane. A helical transmembrane segment spans residues 240–265 (VNVKVFIIIAVFFICFVPFHFARIPY). ADP is bound by residues 262-265 (RIPY), glutamine 269, and lysine 286. The Extracellular portion of the chain corresponds to 266–284 (TLSQTRAVFDCSAENTLFY). A helical transmembrane segment spans residues 285–304 (VKESTLWLTSLNACLDPFIY). At 305–347 (FFLCKSFRNSLTSMLRCSNSTSTSGTNKKKGQEGGEPSEETPM) the chain is on the cytoplasmic side. Residues 321 to 347 (CSNSTSTSGTNKKKGQEGGEPSEETPM) are disordered.

This sequence belongs to the G-protein coupled receptor 1 family.

Its subcellular location is the cell membrane. Receptor for ADP and ATP coupled to G-proteins that inhibit the adenylyl cyclase second messenger system. Required for normal platelet aggregation and blood coagulation. The polypeptide is P2Y purinoceptor 12 (P2ry12) (Mus musculus (Mouse)).